We begin with the raw amino-acid sequence, 540 residues long: GMP synthase [glutamine-hydrolyzing] (540 aa).

In terms of domain architecture, Glutamine amidotransferase type-1 spans Lys-29 to Asp-222. The Nucleophile role is filled by Cys-106. Catalysis depends on residues His-196 and Glu-198. The GMPS ATP-PPase domain maps to Trp-223–Arg-415. Ser-250–Ala-256 contributes to the ATP binding site.

As to quaternary structure, homodimer.

The catalysed reaction is XMP + L-glutamine + ATP + H2O = GMP + L-glutamate + AMP + diphosphate + 2 H(+). The protein operates within purine metabolism; GMP biosynthesis; GMP from XMP (L-Gln route): step 1/1. Catalyzes the synthesis of GMP from XMP. The chain is GMP synthase [glutamine-hydrolyzing] from Rhodopseudomonas palustris (strain HaA2).